The following is a 20-amino-acid chain: ILGPVLGLVGNALGGLIKNE.

The protein belongs to the bombinin family. In terms of tissue distribution, expressed by the skin glands.

It localises to the secreted. Has antimicrobial activity. In Bombina maxima (Giant fire-bellied toad), this protein is Maximin-Ht.